The chain runs to 305 residues: Glycine--tRNA ligase alpha subunit (305 aa).

The protein belongs to the class-II aminoacyl-tRNA synthetase family. Tetramer of two alpha and two beta subunits.

Its subcellular location is the cytoplasm. The enzyme catalyses tRNA(Gly) + glycine + ATP = glycyl-tRNA(Gly) + AMP + diphosphate. This Streptococcus pneumoniae (strain P1031) protein is Glycine--tRNA ligase alpha subunit.